Reading from the N-terminus, the 90-residue chain is Small ribosomal subunit protein bS20 (90 aa).

It belongs to the bacterial ribosomal protein bS20 family.

In terms of biological role, binds directly to 16S ribosomal RNA. The sequence is that of Small ribosomal subunit protein bS20 from Rickettsia canadensis (strain McKiel).